The primary structure comprises 525 residues: Cytochrome P450 CYP72A613 (525 aa).

The helical transmembrane segment at 2–22 (VFLFPTGTIIIWVLTILLAVI) threads the bilayer. Position 473 (Cys473) interacts with heme.

The protein belongs to the cytochrome P450 family. As to expression, mainly expressed in leaves and seed pods and, to a lower extent, in flowers and stems.

The protein resides in the membrane. It functions in the pathway steroid metabolism; cholesterol metabolism. Its function is as follows. Involved in the biosynthesis of spiroketal steroid and saponin natural products from cholesterol such as diosgenin and analogs (e.g. furostanol and spirostanol), plant defense compounds used as main precursors for the industrial production of steroid hormones. During the 5,6-spiroketalization of cholesterol, may catalyze the 27-monohydroxylation of furostanol-type steroid to an intermediate product that undergoes a stereospecific formation of the terminal heterocycle to yield diosgenin. This Trigonella foenum-graecum (Fenugreek) protein is Cytochrome P450 CYP72A613.